Here is a 112-residue protein sequence, read N- to C-terminus: Protein Churchill (112 aa).

Positions 2, 5, 30, 33, 59, 61, 64, 66, 71, 88, and 91 each coordinate Zn(2+).

The protein belongs to the Churchill family.

Transcriptional activator that mediates FGF signaling during neural development. Plays a role in the regulation of cell movement. Does not bind DNA by itself. The sequence is that of Protein Churchill (churc1) from Xenopus laevis (African clawed frog).